The sequence spans 530 residues: Cation channel sperm-associated protein 2 (530 aa).

Residues 1 to 108 (MAAYQQEEQM…LWAGWVLECP (108 aa)) are Cytoplasmic-facing. A helical membrane pass occupies residues 109–131 (LFKNFIIFLVFLNTIILMVEIEL). Over 132–140 (LESTNTKLW) the chain is Extracellular. Residues 141-166 (PLKLTLEVAAWFILLIFILEILLKWL) form a helical membrane-spanning segment. Topologically, residues 167-175 (SNFSVFWKS) are cytoplasmic. Residues 176 to 200 (AWNVFDFVVTMLSLLPEVVVLVGVT) form a helical membrane-spanning segment. Residues 201–203 (GQS) are Extracellular-facing. The helical transmembrane segment at 204–222 (VWLQLLRICRVLRSLKLLA) threads the bilayer. At 223–239 (QFRQIQIIILVLVRALK) the chain is on the cytoplasmic side. A helical membrane pass occupies residues 240 to 262 (SMTFLLMLLLIFFYIFAVTGVYV). The Extracellular portion of the chain corresponds to 263-281 (FSEYTRSPRQDLEYHVFFS). Residues 282–294 (DLPNSLVTVFILF) constitute an intramembrane region (helical; Pore-forming). The Extracellular segment spans residues 295 to 314 (TLDHWYALLQDVWKVPEVSR). Residues 315 to 341 (IFSSIYFILWLLLGSIIFRSIIVAMMV) traverse the membrane as a helical segment. At 342–530 (TNFQNIRKEL…VQALMNLEDK (189 aa)) the chain is on the cytoplasmic side. The tract at residues 378–458 (MSHEALTSSH…TSSSYSSSSE (81 aa)) is disordered. A compositionally biased stretch (basic and acidic residues) spans 429–440 (KTEETLSKKREY). Positions 442 to 458 (SSSCVSSTSSSYSSSSE) are enriched in low complexity.

It belongs to the cation channel sperm-associated (TC 1.A.1.19) family. Component of the CatSper complex or CatSpermasome composed of the core pore-forming members CATSPER1, CATSPER2, CATSPER3 and CATSPER4 as well as auxiliary members CATSPERB, CATSPERG, CATSPERD, CATSPERE, CATSPERZ, C2CD6/CATSPERT, TMEM249, TMEM262 and EFCAB9. HSPA1 may be an additional auxiliary complex member. The core complex members CATSPER1, CATSPER2, CATSPER3 and CATSPER4 form a heterotetrameric channel. The auxiliary CATSPERB, CATSPERG, CATSPERD and CATSPERE subunits form a pavilion-like structure over the pore which stabilizes the complex through interactions with CATSPER4, CATSPER3, CATSPER1 and CATSPER2 respectively. TMEM262/CATSPERH interacts with CATSPERB, further stabilizing the complex. C2CD6/CATSPERT interacts at least with CATSPERD and is required for targeting the CatSper complex in the flagellar membrane. Interacts with Ca(v)3.3/CACNA1I, leading to suppression of T-type calcium channel activity. In terms of tissue distribution, testis-specific.

It localises to the cell projection. Its subcellular location is the cilium. The protein localises to the flagellum membrane. It carries out the reaction Ca(2+)(in) = Ca(2+)(out). The CatSper calcium channel is indirectly activated by extracellular progesterone and prostaglandins following the sequence: progesterone &gt; PGF1-alpha = PGE1 &gt; PGA1 &gt; PGE2 &gt;&gt; PGD2. The CatSper calcium channel is directly inhibited by endocannabinoid 2-arachidonoylglycerol (2AG). Indirect activation by progesterone takes place via the following mechanism: progesterone binds and activates the acylglycerol lipase ABHD2, which in turn mediates hydrolysis of 2AG inhibitor, relieving inhibition of the CatSper channel. The primary effect of progesterone activation is to shift voltage dependence towards more physiological, negative membrane potentials; it is not mediated by metabotropic receptors and second messengers. Sperm capacitation enhances the effect of progesterone by providing additional negative shift. Also activated by the elevation of intracellular pH. In terms of biological role, pore-forming subunit of the CatSper complex, a sperm-specific voltage-gated calcium channel, that plays a central role in calcium-dependent physiological responses essential for successful fertilization, such as sperm hyperactivation, acrosome reaction and chemotaxis towards the oocyte. This chain is Cation channel sperm-associated protein 2 (CATSPER2), found in Homo sapiens (Human).